Consider the following 109-residue polypeptide: Large ribosomal subunit protein uL22 (109 aa).

It belongs to the universal ribosomal protein uL22 family. As to quaternary structure, part of the 50S ribosomal subunit.

Functionally, this protein binds specifically to 23S rRNA; its binding is stimulated by other ribosomal proteins, e.g. L4, L17, and L20. It is important during the early stages of 50S assembly. It makes multiple contacts with different domains of the 23S rRNA in the assembled 50S subunit and ribosome. Its function is as follows. The globular domain of the protein is located near the polypeptide exit tunnel on the outside of the subunit, while an extended beta-hairpin is found that lines the wall of the exit tunnel in the center of the 70S ribosome. This is Large ribosomal subunit protein uL22 from Cupriavidus taiwanensis (strain DSM 17343 / BCRC 17206 / CCUG 44338 / CIP 107171 / LMG 19424 / R1) (Ralstonia taiwanensis (strain LMG 19424)).